Consider the following 1264-residue polypeptide: Valine--tRNA ligase (1264 aa).

Serine 2 carries the post-translational modification N-acetylserine. Residues glycine 89 to glutamine 219 form the GST C-terminal domain. The segment covering glutamine 218 to threonine 230 has biased composition (polar residues). The segment at glutamine 218–methionine 296 is disordered. Composition is skewed to basic and acidic residues over residues leucine 234–glutamine 248 and histidine 260–proline 275. Residues proline 344–histidine 354 carry the 'HIGH' region motif. Residues serine 437 and serine 527 each carry the phosphoserine modification. Lysine 645 carries the N6-acetyllysine modification. The short motif at lysine 862 to serine 866 is the 'KMSKS' region element. Position 865 (lysine 865) interacts with ATP.

Belongs to the class-I aminoacyl-tRNA synthetase family. In terms of assembly, forms high-molecular-mass aggregates with elongation factor 1.

The catalysed reaction is tRNA(Val) + L-valine + ATP = L-valyl-tRNA(Val) + AMP + diphosphate. Its activity is regulated as follows. Can be regulated by protein kinase C-dependent phosphorylation. The polypeptide is Valine--tRNA ligase (Vars1) (Rattus norvegicus (Rat)).